A 241-amino-acid chain; its full sequence is Superoxide dismutase [Mn] 2, mitochondrial (241 aa).

Positions 60, 108, 197, and 201 each coordinate Mn(2+).

Belongs to the iron/manganese superoxide dismutase family. In terms of assembly, homotetramer. It depends on Mn(2+) as a cofactor.

The protein resides in the mitochondrion matrix. It carries out the reaction 2 superoxide + 2 H(+) = H2O2 + O2. Destroys superoxide anion radicals which are normally produced within the cells and which are toxic to biological systems. This chain is Superoxide dismutase [Mn] 2, mitochondrial (MSD2), found in Arabidopsis thaliana (Mouse-ear cress).